The chain runs to 315 residues: Methionyl-tRNA formyltransferase (315 aa).

A (6S)-5,6,7,8-tetrahydrofolate-binding site is contributed by 113-116; it reads SLLP.

The protein belongs to the Fmt family.

It catalyses the reaction L-methionyl-tRNA(fMet) + (6R)-10-formyltetrahydrofolate = N-formyl-L-methionyl-tRNA(fMet) + (6S)-5,6,7,8-tetrahydrofolate + H(+). Functionally, attaches a formyl group to the free amino group of methionyl-tRNA(fMet). The formyl group appears to play a dual role in the initiator identity of N-formylmethionyl-tRNA by promoting its recognition by IF2 and preventing the misappropriation of this tRNA by the elongation apparatus. The polypeptide is Methionyl-tRNA formyltransferase (Salmonella gallinarum (strain 287/91 / NCTC 13346)).